Consider the following 79-residue polypeptide: Ponericin-W-like 32.1 (79 aa).

A signal peptide spans 1-23 (MKCKKQLLVIFFAYFLVVNESEA). Positions 49-79 (RALMKRDLEDIMDPYQKNLKLDRYLRRLAMD) are excised as a propeptide.

It belongs to the non-disulfide-bridged peptide (NDBP) superfamily. Medium-length antimicrobial peptide (group 3) family. Ponericin-W subfamily. As to expression, expressed by the venom gland.

Its subcellular location is the secreted. The protein localises to the target cell membrane. Its function is as follows. Antimicrobial peptide with potent activity against a range of Gram-positive and Gram-negative bacteria. Has high hemolytic activity against erythrocytes. May act by disrupting the integrity of the bacterial cell membrane. The protein is Ponericin-W-like 32.1 of Lychas mucronatus (Chinese swimming scorpion).